Reading from the N-terminus, the 345-residue chain is Phosphoribosylformylglycinamidine cyclo-ligase (345 aa).

It belongs to the AIR synthase family.

Its subcellular location is the cytoplasm. It carries out the reaction 2-formamido-N(1)-(5-O-phospho-beta-D-ribosyl)acetamidine + ATP = 5-amino-1-(5-phospho-beta-D-ribosyl)imidazole + ADP + phosphate + H(+). The protein operates within purine metabolism; IMP biosynthesis via de novo pathway; 5-amino-1-(5-phospho-D-ribosyl)imidazole from N(2)-formyl-N(1)-(5-phospho-D-ribosyl)glycinamide: step 2/2. The sequence is that of Phosphoribosylformylglycinamidine cyclo-ligase from Bifidobacterium longum subsp. infantis (strain ATCC 15697 / DSM 20088 / JCM 1222 / NCTC 11817 / S12).